We begin with the raw amino-acid sequence, 407 residues long: Pleckstrin homology-like domain family A member 1 (407 aa).

Composition is skewed to basic and acidic residues over residues 1–11 (MRRTPAAERLS) and 54–63 (RSAEDGREQP). Positions 1–67 (MRRTPAAERL…DGREQPAHGS (67 aa)) are disordered. Positions 149 to 184 (SGCKALKEGVLEKRSDGLLQLWKKKCCILTEEGLLL) constitute a PH domain. 2 disordered regions span residues 188–224 (KQVQHQQQQQQQQQPGQGTAEPSQPSGPAVTSLEPPA) and 296–407 (QQHL…SNSA). Composition is skewed to low complexity over residues 189–204 (QVQHQQQQQQQQQPGQ) and 297–319 (QHLVQQQPPQTQQIQPQPQQPQI). Residues 312–348 (PQPQQPQIQPQPQPQIQPQPQPQPQPQPQPQQQPQPQ) are 15 X 2 AA repeats of P-Q. Positions 320–344 (QPQPQPQIQPQPQPQPQPQPQPQQQ) are enriched in pro residues. Positions 354-381 (PHPHPHLYPHPHPHAHSHPHPHPHPHPH) are 11 X 2 AA repeats of P-H. The segment covering 354-384 (PHPHPHLYPHPHPHAHSHPHPHPHPHPHQLQ) has biased composition (basic residues). The segment covering 385–395 (HAHQPLHSQPQ) has biased composition (low complexity).

In terms of assembly, interacts with RPL14, EIF3S7 and PABPC4.

It localises to the cytoplasm. Its subcellular location is the cytoplasmic vesicle. The protein localises to the nucleus. It is found in the nucleolus. In terms of biological role, seems to be involved in regulation of apoptosis. May be involved in detachment-mediated programmed cell death. May mediate apoptosis during neuronal development. May be involved in regulation of anti-apoptotic effects of IGF1. May be involved in translational regulation. The polypeptide is Pleckstrin homology-like domain family A member 1 (Phlda1) (Rattus norvegicus (Rat)).